A 554-amino-acid polypeptide reads, in one-letter code: Thermosome subunit alpha (554 aa).

Residues proline 530–phenylalanine 554 are disordered.

The protein belongs to the TCP-1 chaperonin family. In terms of assembly, forms a Heterooligomeric complex of two stacked eight-membered rings.

In terms of biological role, molecular chaperone; binds unfolded polypeptides in vitro, and has a weak ATPase activity. This chain is Thermosome subunit alpha (thsA), found in Aeropyrum pernix (strain ATCC 700893 / DSM 11879 / JCM 9820 / NBRC 100138 / K1).